Here is a 519-residue protein sequence, read N- to C-terminus: Molybdate transporter 1 (519 aa).

7 helical membrane passes run 98–118 (LLHAGLFVAGCVGLLGASQAI), 164–184 (LGTEGLVVGAVALAAMIATTL), 370–390 (AVALSVALLNGAGVWLGAMPC), 412–432 (ILLGCIKAALGLLFGGSLVVL), 436–456 (FPQPLLGALLTVSGIELASVV), 464–484 (GYTFALLTAVAILALDNTGTG), and 485–505 (FLVGLVGVAAVAAYEGAVAAA).

This sequence belongs to the SLC26A/SulP transporter (TC 2.A.53) family.

It is found in the membrane. With respect to regulation, 60% inhibition by 20 uM tungstate or by lack of glucose in the medium, but no inhibition by sulfate. High affinity molybdate transporter. Acts through an energy-dependent process. The polypeptide is Molybdate transporter 1 (MOT1) (Chlamydomonas reinhardtii (Chlamydomonas smithii)).